The sequence spans 533 residues: Early growth response protein 1 (533 aa).

Disordered regions lie at residues Met1–Tyr94 and Met161–Ala237. Residues Ser68 to Asn77 are compositionally biased toward gly residues. The span at Pro164 to Ser189 shows a compositional bias: low complexity. Lys303 is covalently cross-linked (Glycyl lysine isopeptide (Lys-Gly) (interchain with G-Cter in SUMO2)). The tract at residues Pro316–Tyr336 is disordered. 3 C2H2-type zinc fingers span residues Tyr336 to His360, Phe366 to His388, and Phe394 to His416. Residues Asp407 to Ser478 form a disordered region. The span at Arg411 to Asp421 shows a compositional bias: basic residues. Residues Ser427 to Pro475 show a composition bias toward low complexity.

This sequence belongs to the EGR C2H2-type zinc-finger protein family. Interacts with SNAI1 and SP1 upon 12-O-tetradecanoylphorbol-13-acetate (TPA) induction. Detected in lung vasculature and in mononuclear phagocytes. Detected in liver (at protein level). Expressed in the liver in a circadian manner.

It localises to the nucleus. The protein resides in the cytoplasm. Functionally, transcriptional regulator. Recognizes and binds to the DNA sequence 5'-GCG(T/G)GGGCG-3'(EGR-site) in the promoter region of target genes. Binds double-stranded target DNA, irrespective of the cytosine methylation status. Regulates the transcription of numerous target genes, and thereby plays an important role in regulating the response to growth factors, DNA damage, and ischemia. Plays a role in the regulation of cell survival, proliferation and cell death. Activates expression of p53/TP53 and TGFB1, and thereby helps prevent tumor formation. Required for normal progress through mitosis and normal proliferation of hepatocytes after partial hepatectomy. Mediates responses to ischemia and hypoxia; regulates the expression of proteins such as IL1B and CXCL2 that are involved in inflammatory processes and development of tissue damage after ischemia. Regulates biosynthesis of luteinizing hormone (LHB) in the pituitary. Regulates the amplitude of the expression rhythms of clock genes: BMAL1, PER2 and NR1D1 in the liver via the activation of PER1 (clock repressor) transcription. Regulates the rhythmic expression of core-clock gene BMAL1 in the suprachiasmatic nucleus (SCN). This Mus musculus (Mouse) protein is Early growth response protein 1 (Egr1).